A 313-amino-acid chain; its full sequence is Intelectin-like protein (313 aa).

Residues 33–251 form the Fibrinogen C-terminal domain; sequence TSCCSQTSPG…NNEKAPMALC (219 aa). Residues H86, E87, N89, G92, G97, D98, and D133 each contribute to the Ca(2+) site. Intrachain disulfides connect C94/C280, C199/C259, and C251/C265. Residues N260, E262, E274, and D282 each coordinate Ca(2+). A carbohydrate contacts are provided by residues 262 to 263 and E274; that span reads EH.

Monomer, homodimer, homotrimer and homotetramer. Mostly monomeric or dimeric.

The protein localises to the secreted. Functionally, binds mannan, mannose and, to a lesser degree, D-lactose, N-acetylgalactosamine, N-acetylglucosamine and beta-D-glucose. The sequence is that of Intelectin-like protein from Alligator mississippiensis (American alligator).